A 307-amino-acid chain; its full sequence is Ribosomal RNA small subunit methyltransferase H (307 aa).

Residues 34–36 (GGH), Asp-53, Leu-88, Asp-102, and Gln-109 each bind S-adenosyl-L-methionine.

Belongs to the methyltransferase superfamily. RsmH family.

The protein localises to the cytoplasm. It carries out the reaction cytidine(1402) in 16S rRNA + S-adenosyl-L-methionine = N(4)-methylcytidine(1402) in 16S rRNA + S-adenosyl-L-homocysteine + H(+). Specifically methylates the N4 position of cytidine in position 1402 (C1402) of 16S rRNA. The polypeptide is Ribosomal RNA small subunit methyltransferase H (Sulfurimonas denitrificans (strain ATCC 33889 / DSM 1251) (Thiomicrospira denitrificans (strain ATCC 33889 / DSM 1251))).